Reading from the N-terminus, the 234-residue chain is Ubiquitin thioesterase OTUB2 (234 aa).

Residues 40–231 (TAIRKTKGDG…TSHYNILYAA (192 aa)) form the OTU domain. Asp48 is a catalytic residue. Cys51 (nucleophile) is an active-site residue. His224 is a catalytic residue.

This sequence belongs to the peptidase C65 family. Widely expressed. Expressed at higher level in brain.

The catalysed reaction is Thiol-dependent hydrolysis of ester, thioester, amide, peptide and isopeptide bonds formed by the C-terminal Gly of ubiquitin (a 76-residue protein attached to proteins as an intracellular targeting signal).. Its function is as follows. Hydrolase that can remove conjugated ubiquitin from proteins in vitro and may therefore play an important regulatory role at the level of protein turnover by preventing degradation. Mediates deubiquitination of 'Lys-11'-,'Lys-48'- and 'Lys-63'-linked polyubiquitin chains, with a preference for 'Lys-63'-linked polyubiquitin chains. The sequence is that of Ubiquitin thioesterase OTUB2 (OTUB2) from Homo sapiens (Human).